The primary structure comprises 411 residues: Alpha-galactosidase (411 aa).

The signal sequence occupies residues 1-24 (MATHYSIIGGMIIVVLLMIIGSEG). A propeptide spanning residues 25–47 (GRLLEKKNRTSAEAEHYNVRRYL) is cleaved from the precursor. An N-linked (GlcNAc...) asparagine glycan is attached at Asn-32. Cys-68 and Cys-100 form a disulfide bridge. Asn-145 carries an N-linked (GlcNAc...) asparagine glycan. Cys-148 and Cys-179 form a disulfide bridge. Asp-177 functions as the Nucleophile in the catalytic mechanism. A substrate-binding site is contributed by 210–214 (EWGWE). Catalysis depends on Asp-232, which acts as the Proton donor. Residue Asn-352 is glycosylated (N-linked (GlcNAc...) asparagine).

It belongs to the glycosyl hydrolase 27 family.

The catalysed reaction is Hydrolysis of terminal, non-reducing alpha-D-galactose residues in alpha-D-galactosides, including galactose oligosaccharides, galactomannans and galactolipids.. Functionally, involved in the hydrolysis of the galactomannan, it splits alpha-linked galactose moieties. It is particularly suitable for the hydrolysis of guar gum to a gum with improved gelling properties. Preferentially cleaves alpha-1,6 glycoside linkages. This chain is Alpha-galactosidase, found in Cyamopsis tetragonoloba (Guar).